Consider the following 304-residue polypeptide: Ferrochelatase (304 aa).

Positions 169 and 241 each coordinate Fe cation.

Belongs to the ferrochelatase family.

It localises to the cytoplasm. The enzyme catalyses heme b + 2 H(+) = protoporphyrin IX + Fe(2+). Its pathway is porphyrin-containing compound metabolism; protoheme biosynthesis; protoheme from protoporphyrin-IX: step 1/1. Its function is as follows. Catalyzes the ferrous insertion into protoporphyrin IX. In Thermoplasma volcanium (strain ATCC 51530 / DSM 4299 / JCM 9571 / NBRC 15438 / GSS1), this protein is Ferrochelatase.